Consider the following 1779-residue polypeptide: Collagen alpha-1(IV) chain (1779 aa).

A signal peptide spans 1 to 23 (MLPFWKRLLYAAVIAGALVGADA). An N-linked (GlcNAc...) asparagine glycan is attached at Asn-72. Disordered regions lie at residues 89–643 (GNRG…KPAL), 655–1187 (DKGY…LPGL), 1200–1285 (TGAP…IGPR), and 1336–1530 (GLPG…RGYE). Residues 144–163 (QAGVPGVQGPAGNPGAPGIN) show a composition bias toward low complexity. Composition is skewed to basic and acidic residues over residues 196-217 (KGEK…KGEP) and 249-259 (PRGEHGLKGEK). Residues 360-369 (PGLNGLPGNP) show a composition bias toward low complexity. Over residues 434 to 443 (GQKGGAGLPG) the composition is skewed to gly residues. The segment covering 531–545 (GRPGTPGAAGAPGQK) has biased composition (low complexity). Basic and acidic residues predominate over residues 724-747 (PGFHGRDGAKGDKGSFGRSGEKGE). Low complexity-rich tracts occupy residues 913-931 (VGPI…PGID) and 1015-1036 (PGLM…QGLD). Basic and acidic residues predominate over residues 1106 to 1127 (EKGDQGRSGIDGRDGINGEKGE). The segment covering 1151–1170 (APGMDGLPGAAGAPGAVGYP) has biased composition (low complexity). Basic and acidic residues-rich tracts occupy residues 1224–1245 (IRGD…EQGE), 1496–1505 (ERGEKGERGL), and 1517–1529 (PKGD…ERGY). Residues 1555–1778 (GILITRHSQS…SRCQVCMKNS (224 aa)) form the Collagen IV NC1 domain. Disulfide bonds link Cys-1570-Cys-1659, Cys-1603-Cys-1656, Cys-1615-Cys-1621, Cys-1678-Cys-1774, Cys-1712-Cys-1771, and Cys-1724-Cys-1731.

It belongs to the type IV collagen family. Trimers of two alpha 1(IV) and one alpha 2(IV) chain. Type IV collagen forms a mesh-like network linked through intermolecular interactions between 7S domains and between NC1 domains. Prolines at the third position of the tripeptide repeating unit (G-X-Y) are hydroxylated in some or all of the chains. In terms of processing, type IV collagens contain numerous cysteine residues which are involved in inter- and intramolecular disulfide bonding. 12 of these, located in the NC1 domain, are conserved in all known type IV collagens.

The protein resides in the secreted. It is found in the extracellular space. Its subcellular location is the extracellular matrix. The protein localises to the basement membrane. Its function is as follows. Collagen type IV is specific for basement membranes. This chain is Collagen alpha-1(IV) chain, found in Drosophila melanogaster (Fruit fly).